We begin with the raw amino-acid sequence, 239 residues long: Ribonuclease PH (239 aa).

Residues Arg-87 and 125–127 (GTR) each bind phosphate.

Belongs to the RNase PH family. As to quaternary structure, homohexameric ring arranged as a trimer of dimers.

The catalysed reaction is tRNA(n+1) + phosphate = tRNA(n) + a ribonucleoside 5'-diphosphate. Functionally, phosphorolytic 3'-5' exoribonuclease that plays an important role in tRNA 3'-end maturation. Removes nucleotide residues following the 3'-CCA terminus of tRNAs; can also add nucleotides to the ends of RNA molecules by using nucleoside diphosphates as substrates, but this may not be physiologically important. Probably plays a role in initiation of 16S rRNA degradation (leading to ribosome degradation) during starvation. The protein is Ribonuclease PH of Cyanothece sp. (strain PCC 7425 / ATCC 29141).